Reading from the N-terminus, the 246-residue chain is Putative carbonic anhydrase 3 (246 aa).

One can recognise an Alpha-carbonic anhydrase domain in the interval 3 to 244 (GHWSYCDDDE…LNDRKIVHIV (242 aa)). His61 functions as the Proton acceptor in the catalytic mechanism. Positions 91, 93, and 116 each coordinate Zn(2+). 187-188 (TT) lines the substrate pocket.

The protein belongs to the alpha-carbonic anhydrase family. Requires Zn(2+) as cofactor.

The enzyme catalyses hydrogencarbonate + H(+) = CO2 + H2O. Reversible hydration of carbon dioxide. The sequence is that of Putative carbonic anhydrase 3 (cah-3) from Caenorhabditis elegans.